Reading from the N-terminus, the 344-residue chain is Lipase chaperone (344 aa).

A helical transmembrane segment spans residues 14-34 (AVVYGVVGLAAIAGVAMWSGA). Residues 39–78 (ATGASGESPEASVAGGSVTAPPQAAVPASTGLPPSLAGSS) form a disordered region.

Belongs to the lipase chaperone family.

It localises to the cell inner membrane. Functionally, may be involved in the folding of the extracellular lipase during its passage through the periplasm. This chain is Lipase chaperone (lifO), found in Pseudomonas sp. (strain KWI-56).